Consider the following 1379-residue polypeptide: ATPase histone chaperone YTA7 (1379 aa).

Disordered regions lie at residues 1–39 (MARN…TTTR) and 54–243 (DFLE…NSRN). Ala-2 carries the post-translational modification N-acetylalanine. Phosphoserine is present on residues Ser-11 and Ser-17. The segment covering 61-78 (VMDKDETPVDVTSDEHHN) has biased composition (basic and acidic residues). The residue at position 94 (Ser-94) is a Phosphoserine. The segment covering 97–110 (ENARTNEELTNERN) has biased composition (basic and acidic residues). Acidic residues-rich tracts occupy residues 119-152 (PEED…DEDS) and 170-184 (DPDD…DEEG). The segment covering 192-207 (SSKRLKRANSRRTRSS) has biased composition (basic residues). Thr-212 bears the Phosphothreonine mark. The segment covering 218–228 (RALRSRTRHSR) has biased composition (basic residues). Residue Thr-229 is modified to Phosphothreonine. A phosphoserine mark is found at Ser-241, Ser-259, and Ser-285. A disordered region spans residues 302–330 (NPSPARRGRGGWNASQNSGPTRRLFPTGG). Phosphoserine occurs at positions 367, 369, and 370. The tract at residues 375–396 (LPLGVTPKTKKENTQKKKKKKP) is disordered. The segment at 450–578 (VLFHGPPGTG…PALRRPGRFD (129 aa)) is AAA-ATPase; required for its chromatin boundary function. ATP is bound at residue 454 to 461 (GPPGTGKT). Ser-735 carries the post-translational modification Phosphoserine. Residues 974–1101 (RLKNVLKIKL…ANAQMGIEEI (128 aa)) form the Bromo domain. At Ser-1142 the chain carries Phosphoserine. 2 disordered regions span residues 1233 to 1274 (TCTS…ANTN) and 1291 to 1316 (LHET…GKKS). Residues 1244–1254 (ERARKEPKENE) show a composition bias toward basic and acidic residues. Phosphoserine is present on Ser-1256. Residues 1256–1274 (SLQTQVTEENFSKIDANTN) are compositionally biased toward polar residues. Residues 1293 to 1316 (ETVEKRERSPIPKEVVEPEQGKKS) are compositionally biased toward basic and acidic residues.

Belongs to the AAA ATPase family. In terms of assembly, interacts with CSE4/CENP-A. Interacts with SCM3. Interacts with SPT16. Interacts with POB3. Interacts with the casein kinase II complex subunits CKA1, CKA2, CKB1 and CKB2. Interacts with RNA polymerase II. Interacts (via Bromo domain) with histone H3. Interacts (via Bromo domain) with histone H4. Post-translationally, phosphorylated by CDK1 and casein kinase II during S-phase, which leads to its eviction from histone gene promoters and promotes histone gene transcription.

The protein localises to the chromosome. It localises to the centromere. The protein resides in the nucleus. Functionally, functions as an ATP-dependent nucleosome disassembly factor that helps evict canonical histone H3 from the 5'-end of genes upon their induction. Also contributes to kinetochore assembly by cooperating with SCM3 to load the histone H3 variant CSE4/CENP-A at centromeres. Provides a chromatin boundary function at the 5'-end of genes that restricts access by RTT106 and thus prevents ectopic spreading of repressive chromatin into coding regions. Also prevents heterochromatin spreading downstream of the silent mating-type locus HMR, this function is independent of the tRNA boundary element. Contributes to appropriate cell cycle regulation of histone gene expression by recruiting RNA polymerase II to histone genes, and subsequent CDK1- and casein kinase II-dependent eviction from chromatin is required to promote transcriptional elongation. The chain is ATPase histone chaperone YTA7 from Saccharomyces cerevisiae (strain ATCC 204508 / S288c) (Baker's yeast).